An 874-amino-acid polypeptide reads, in one-letter code: Alanine--tRNA ligase (874 aa).

The Zn(2+) site is built by histidine 562, histidine 566, cysteine 665, and histidine 669.

This sequence belongs to the class-II aminoacyl-tRNA synthetase family. The cofactor is Zn(2+).

The protein resides in the cytoplasm. It catalyses the reaction tRNA(Ala) + L-alanine + ATP = L-alanyl-tRNA(Ala) + AMP + diphosphate. Functionally, catalyzes the attachment of alanine to tRNA(Ala) in a two-step reaction: alanine is first activated by ATP to form Ala-AMP and then transferred to the acceptor end of tRNA(Ala). Also edits incorrectly charged Ser-tRNA(Ala) and Gly-tRNA(Ala) via its editing domain. This Pseudomonas fluorescens (strain ATCC BAA-477 / NRRL B-23932 / Pf-5) protein is Alanine--tRNA ligase.